The sequence spans 340 residues: Tryptophan--tRNA ligase (340 aa).

ATP-binding positions include 11-13 (RPT) and 19-20 (GH). The 'HIGH' region motif lies at 12-20 (PTGKLHLGH). Asp-140 provides a ligand contact to L-tryptophan. ATP-binding positions include 152–154 (GND), Leu-194, and 202–206 (KMSKS). Residues 202 to 206 (KMSKS) carry the 'KMSKS' region motif.

The protein belongs to the class-I aminoacyl-tRNA synthetase family. Homodimer.

The protein resides in the cytoplasm. The enzyme catalyses tRNA(Trp) + L-tryptophan + ATP = L-tryptophyl-tRNA(Trp) + AMP + diphosphate + H(+). Catalyzes the attachment of tryptophan to tRNA(Trp). This Streptococcus pyogenes serotype M3 (strain ATCC BAA-595 / MGAS315) protein is Tryptophan--tRNA ligase.